We begin with the raw amino-acid sequence, 338 residues long: Anthranilate phosphoribosyltransferase (338 aa).

5-phospho-alpha-D-ribose 1-diphosphate contacts are provided by residues G81, 84–85, T89, 91–94, 109–117, and A121; these read GD, NIST, and KHGNRNLSS. G81 contributes to the anthranilate binding site. Residue S93 coordinates Mg(2+). Residue N112 coordinates anthranilate. Residue R167 participates in anthranilate binding. Mg(2+)-binding residues include D226 and E227.

It belongs to the anthranilate phosphoribosyltransferase family. Homodimer. It depends on Mg(2+) as a cofactor.

It carries out the reaction N-(5-phospho-beta-D-ribosyl)anthranilate + diphosphate = 5-phospho-alpha-D-ribose 1-diphosphate + anthranilate. It participates in amino-acid biosynthesis; L-tryptophan biosynthesis; L-tryptophan from chorismate: step 2/5. In terms of biological role, catalyzes the transfer of the phosphoribosyl group of 5-phosphorylribose-1-pyrophosphate (PRPP) to anthranilate to yield N-(5'-phosphoribosyl)-anthranilate (PRA). The protein is Anthranilate phosphoribosyltransferase of Cereibacter sphaeroides (strain ATCC 17025 / ATH 2.4.3) (Rhodobacter sphaeroides).